The primary structure comprises 501 residues: Beta-secretase 1 (501 aa).

Positions 1-21 (MAQALPWLLLWMGAGVLPAHG) are cleaved as a signal peptide. Positions 22-45 (TQHGIRLPLRSGLGGAPLGLRLPR) are excised as a propeptide. The Extracellular portion of the chain corresponds to 22-457 (TQHGIRLPLR…PQTDESTLMT (436 aa)). A disordered region spans residues 39–58 (LGLRLPRETDEEPEEPGRRG). In terms of domain architecture, Peptidase A1 spans 75 to 416 (YYVEMTVGSP…DRARKRIGFA (342 aa)). Residue D93 is part of the active site. At K126 the chain carries N6-acetyllysine. N153, N172, and N223 each carry an N-linked (GlcNAc...) asparagine glycan. Intrachain disulfides connect C216–C420, C278–C443, and C330–C380. K275, K279, and K285 each carry N6-acetyllysine. D289 is an active-site residue. An N6-acetyllysine mark is found at K299, K300, and K307. The N-linked (GlcNAc...) asparagine glycan is linked to N354. A helical transmembrane segment spans residues 458–478 (IAYVMAAICALFMLPLCLMVC). S-palmitoyl cysteine attachment occurs at residues C474, C478, C482, and C485. Residues 479–501 (QWRCLRCLRQQHDDFADDISLLK) lie on the Cytoplasmic side of the membrane. The interaction with RTN3 stretch occupies residues 479–501 (QWRCLRCLRQQHDDFADDISLLK). The short motif at 496–500 (DISLL) is the DXXLL element. S498 carries the phosphoserine modification. Residue K501 forms a Glycyl lysine isopeptide (Lys-Gly) (interchain with G-Cter in ubiquitin) linkage.

The protein belongs to the peptidase A1 family. Monomer. Interacts (via DXXLL motif) with GGA1, GGA2 and GGA3 (via their VHS domain); the interaction highly increases when BACE1 is phosphorylated at Ser-498. Interacts with RTN1; RTN2; RTN3 and RTN4; the interaction leads to inhibition of amyloid precursor protein processing. Interacts with SNX6. Interacts with PCSK9. Interacts with NAT8 and NAT8B. Interacts with BIN1. Interacts (via extracellular domain) with ADAM10 (via extracellular domain). Interacts with SORL1; this interaction may affect binding with APP and hence reduce APP cleavage. Interacts with NRDC AND NRG1. In terms of processing, N-Glycosylated. Addition of a bisecting N-acetylglucosamine by MGAT3 blocks lysosomal targeting, further degradation and is required for maintaining stability under stress conditions. Acetylated in the endoplasmic reticulum at Lys-126, Lys-275, Lys-279, Lys-285, Lys-299, Lys-300 and Lys-307. Acetylation by NAT8 and NAT8B is transient and deacetylation probably occurs in the Golgi. Acetylation regulates the maturation, the transport to the plasma membrane, the stability and the expression of the protein. Post-translationally, palmitoylation mediates lipid raft localization. In terms of processing, ubiquitinated at Lys-501, ubiquitination leads to lysosomal degradation. Monoubiquitinated and 'Lys-63'-linked polyubitinated. Deubiquitnated by USP8; inhibits lysosomal degradation. Phosphorylation at Ser-498 is required for interaction with GGA1 and retrograded transport from endosomal compartments to the trans-Golgi network. Non-phosphorylated BACE1 enters a direct recycling route to the cell surface. Expressed at high levels in the brain and pancreas. In the brain, expression is highest in the substantia nigra, locus coruleus and medulla oblongata.

It is found in the cell membrane. It localises to the golgi apparatus. The protein localises to the trans-Golgi network. The protein resides in the endoplasmic reticulum. Its subcellular location is the endosome. It is found in the cell surface. It localises to the cytoplasmic vesicle membrane. The protein localises to the membrane raft. The protein resides in the lysosome. Its subcellular location is the late endosome. It is found in the early endosome. It localises to the recycling endosome. The protein localises to the cell projection. The protein resides in the axon. Its subcellular location is the dendrite. It carries out the reaction Broad endopeptidase specificity. Cleaves Glu-Val-Asn-Leu-|-Asp-Ala-Glu-Phe in the Swedish variant of Alzheimer's amyloid precursor protein.. Inhibited by RTN3 and RTN4. Its function is as follows. Responsible for the proteolytic processing of the amyloid precursor protein (APP). Cleaves at the N-terminus of the A-beta peptide sequence, between residues 671 and 672 of APP, leads to the generation and extracellular release of beta-cleaved soluble APP, and a corresponding cell-associated C-terminal fragment which is later released by gamma-secretase. Cleaves CHL1. This Homo sapiens (Human) protein is Beta-secretase 1.